Consider the following 397-residue polypeptide: MPATITDHKEFQNYAINFGPQHPAAHGVLRLLLELDGEVVERADPHVGLLHRGTEKLLEQKTYIQGTPYFDRLDYMSMMSEEHAWVIAVERLGQIEVPERAQYIRTIYAEITRFINHLLFFAAHGLDVGAMTMFLYCFREREELMDIYEAACGARMHANYFRPGGVARDLPDGLEQRIRDFCNHFPSKLDEYETLLTNNRIWKQRLVDIGKVSQEDAFSWGFTGPMLRGSGVAFDLRKAEPYDAYDRVEFDIPVGKNGDSYDRYLVRIEECREGVKIIQQCLDQMQPGPVRNDNFKISMPYRQDMQQDMESMIHHFKLCTEGFNLPAGEVYAAVETPKGELGVYLVSDGGNKPYRARIRAAGFNHLQAVKEMARGHMIADVTTIIGSIDIVFGEIDR.

Belongs to the complex I 49 kDa subunit family. NDH-1 is composed of 14 different subunits. Subunits NuoB, C, D, E, F, and G constitute the peripheral sector of the complex.

Its subcellular location is the cell inner membrane. The catalysed reaction is a quinone + NADH + 5 H(+)(in) = a quinol + NAD(+) + 4 H(+)(out). Functionally, NDH-1 shuttles electrons from NADH, via FMN and iron-sulfur (Fe-S) centers, to quinones in the respiratory chain. The immediate electron acceptor for the enzyme in this species is believed to be ubiquinone. Couples the redox reaction to proton translocation (for every two electrons transferred, four hydrogen ions are translocated across the cytoplasmic membrane), and thus conserves the redox energy in a proton gradient. The protein is NADH-quinone oxidoreductase subunit D of Magnetococcus marinus (strain ATCC BAA-1437 / JCM 17883 / MC-1).